Here is a 169-residue protein sequence, read N- to C-terminus: Hydroperoxy fatty acid reductase gpx1 (169 aa).

Residue C41 is part of the active site.

It belongs to the glutathione peroxidase family. As to quaternary structure, monomer.

The enzyme catalyses a hydroperoxy polyunsaturated fatty acid + NADPH + H(+) = a hydroxy polyunsaturated fatty acid + NADP(+) + H2O. Mercaptosuccinate, pCMB, and nethylmaleimide act as inhibitors of the catalytic activity. Its function is as follows. Hydroperoxy fatty acid reductase essential for the removal of lipid hydroperoxides under normal and stress conditions, leading to the protection of membrane integrity. In Synechocystis sp. (strain ATCC 27184 / PCC 6803 / Kazusa), this protein is Hydroperoxy fatty acid reductase gpx1 (gpx1).